The chain runs to 798 residues: Peregrinol diphosphate synthase TPS1, chloroplastic (798 aa).

The N-terminal 25 residues, 1-25 (MASLSTPNINNTTFVNSKTQLPAVK), are a transit peptide targeting the chloroplast. A substrate-binding site is contributed by lysine 243. Mg(2+) is bound by residues aspartate 377 and aspartate 379. A DXDD motif motif is present at residues 377–380 (DLDD). Residue lysine 463 coordinates substrate.

The protein belongs to the terpene synthase family. Mg(2+) serves as cofactor. As to expression, mostly expressed in trichomes of leaves and fruits.

The protein localises to the plastid. It localises to the chloroplast. It catalyses the reaction peregrinol diphosphate = (2E,6E,10E)-geranylgeranyl diphosphate + H2O. Its pathway is secondary metabolite biosynthesis; terpenoid biosynthesis. Involved in the biosynthesis of labdane-type diterpenoid including cleroda-dienols, and peregrinol lactones and furan derivatives, dopaminergic diterpenoids that can bind to dopamine receptors in the human pituitary gland, have probably ability to lower prolactin levels, and are used to treat menstrual cycle disorders (e.g. premenstrual syndrome and mastodynia). Terpene synthase that produces peregrinol diphosphate from geranylgeranyl diphosphate (GGPP). The protein is Peregrinol diphosphate synthase TPS1, chloroplastic of Vitex agnus-castus (Chaste tree).